We begin with the raw amino-acid sequence, 233 residues long: Large ribosomal subunit protein uL1 (233 aa).

The protein belongs to the universal ribosomal protein uL1 family. In terms of assembly, part of the 50S ribosomal subunit.

In terms of biological role, binds directly to 23S rRNA. The L1 stalk is quite mobile in the ribosome, and is involved in E site tRNA release. Functionally, protein L1 is also a translational repressor protein, it controls the translation of the L11 operon by binding to its mRNA. This is Large ribosomal subunit protein uL1 from Shewanella frigidimarina (strain NCIMB 400).